Here is a 72-residue protein sequence, read N- to C-terminus: Translation initiation factor IF-1 (72 aa).

The 72-residue stretch at 1-72 (MSKDDVIEMQ…TRGRITWRAK (72 aa)) folds into the S1-like domain.

It belongs to the IF-1 family. As to quaternary structure, component of the 30S ribosomal translation pre-initiation complex which assembles on the 30S ribosome in the order IF-2 and IF-3, IF-1 and N-formylmethionyl-tRNA(fMet); mRNA recruitment can occur at any time during PIC assembly.

It is found in the cytoplasm. One of the essential components for the initiation of protein synthesis. Stabilizes the binding of IF-2 and IF-3 on the 30S subunit to which N-formylmethionyl-tRNA(fMet) subsequently binds. Helps modulate mRNA selection, yielding the 30S pre-initiation complex (PIC). Upon addition of the 50S ribosomal subunit IF-1, IF-2 and IF-3 are released leaving the mature 70S translation initiation complex. This Clostridium botulinum (strain ATCC 19397 / Type A) protein is Translation initiation factor IF-1.